Consider the following 237-residue polypeptide: Uracil-DNA glycosylase (237 aa).

Asp77 serves as the catalytic Proton acceptor.

Belongs to the uracil-DNA glycosylase (UDG) superfamily. UNG family.

The protein resides in the cytoplasm. It catalyses the reaction Hydrolyzes single-stranded DNA or mismatched double-stranded DNA and polynucleotides, releasing free uracil.. Functionally, excises uracil residues from the DNA which can arise as a result of misincorporation of dUMP residues by DNA polymerase or due to deamination of cytosine. The protein is Uracil-DNA glycosylase of Acinetobacter baumannii (strain ACICU).